Here is a 540-residue protein sequence, read N- to C-terminus: Gamma-cadinene synthase (540 aa).

Positions 292, 296, 436, 440, and 444 each coordinate Mg(2+). Residues Asp-292–Asp-296 carry the DDXXD motif motif.

Belongs to the terpene synthase family. The cofactor is Mg(2+). It depends on Mn(2+) as a cofactor.

It catalyses the reaction (2E,6E)-farnesyl diphosphate = (+)-gamma-cadinene + diphosphate. The protein operates within secondary metabolite biosynthesis; terpenoid biosynthesis. Functionally, sesquiterpene synthase that catalyzes the cyclization of trans,trans-farnesyl diphosphate (FPP) to gamma cadinene. The protein is Gamma-cadinene synthase (CDS) of Ocimum basilicum (Sweet basil).